We begin with the raw amino-acid sequence, 343 residues long: UDP-3-O-acylglucosamine N-acyltransferase (343 aa).

H245 acts as the Proton acceptor in catalysis.

The protein belongs to the transferase hexapeptide repeat family. LpxD subfamily. In terms of assembly, homotrimer.

It carries out the reaction a UDP-3-O-[(3R)-3-hydroxyacyl]-alpha-D-glucosamine + a (3R)-hydroxyacyl-[ACP] = a UDP-2-N,3-O-bis[(3R)-3-hydroxyacyl]-alpha-D-glucosamine + holo-[ACP] + H(+). The protein operates within bacterial outer membrane biogenesis; LPS lipid A biosynthesis. In terms of biological role, catalyzes the N-acylation of UDP-3-O-acylglucosamine using 3-hydroxyacyl-ACP as the acyl donor. Is involved in the biosynthesis of lipid A, a phosphorylated glycolipid that anchors the lipopolysaccharide to the outer membrane of the cell. The polypeptide is UDP-3-O-acylglucosamine N-acyltransferase (Phenylobacterium zucineum (strain HLK1)).